We begin with the raw amino-acid sequence, 345 residues long: Phosphoribosylformylglycinamidine cyclo-ligase (345 aa).

This sequence belongs to the AIR synthase family.

The protein resides in the cytoplasm. The catalysed reaction is 2-formamido-N(1)-(5-O-phospho-beta-D-ribosyl)acetamidine + ATP = 5-amino-1-(5-phospho-beta-D-ribosyl)imidazole + ADP + phosphate + H(+). Its pathway is purine metabolism; IMP biosynthesis via de novo pathway; 5-amino-1-(5-phospho-D-ribosyl)imidazole from N(2)-formyl-N(1)-(5-phospho-D-ribosyl)glycinamide: step 2/2. This chain is Phosphoribosylformylglycinamidine cyclo-ligase, found in Methanopyrus kandleri (strain AV19 / DSM 6324 / JCM 9639 / NBRC 100938).